The following is a 329-amino-acid chain: DNA-directed RNA polymerase subunit alpha (329 aa).

The interval 1-235 is alpha N-terminal domain (alpha-NTD); that stretch reads MQGSVTEFLK…EQLDAFVDLR (235 aa). The segment at 249 to 329 is alpha C-terminal domain (alpha-CTD); it reads FDPILLRPVD…NWPPASIAED (81 aa).

It belongs to the RNA polymerase alpha chain family. Homodimer. The RNAP catalytic core consists of 2 alpha, 1 beta, 1 beta' and 1 omega subunit. When a sigma factor is associated with the core the holoenzyme is formed, which can initiate transcription.

The catalysed reaction is RNA(n) + a ribonucleoside 5'-triphosphate = RNA(n+1) + diphosphate. DNA-dependent RNA polymerase catalyzes the transcription of DNA into RNA using the four ribonucleoside triphosphates as substrates. This is DNA-directed RNA polymerase subunit alpha from Aliivibrio salmonicida (strain LFI1238) (Vibrio salmonicida (strain LFI1238)).